The primary structure comprises 217 residues: Nucleolar protein 12 (217 aa).

A coiled-coil region spans residues 34–98 (GFHKRKVERK…LVTAKTESVQ (65 aa)). A disordered region spans residues 122–217 (LGLPLPEQGD…MTGKARHNGE (96 aa)). Over residues 130–141 (GDQDGSQEEEMS) the composition is skewed to acidic residues. Basic residues-rich tracts occupy residues 172–184 (AHSRKKVKRKHPR) and 201–217 (KTQRRRRMTGKARHNGE).

It belongs to the RRP17 family. As to quaternary structure, interacts with KIAA1191. Expressed in brain, lung, spleen, kidney and heart.

The protein resides in the nucleus. It is found in the nucleolus. The protein localises to the cytoplasm. In terms of biological role, multifunctional RNA binding protein that plays a role in RNA metabolism and DNA maintenance. Participates in the resolution of DNA stress and the maintenance of genome integrity by localizing to sites of DNA insults. Also plays a role in proper nucleolar organization by limiting nucleolar size and regulating nucleolar number. Mechanistically, regulates the nucleolar levels of fibrillarin and nucleolin, two key players in pre-rRNA processing and ribosome assembly. The protein is Nucleolar protein 12 (Nol12) of Mus musculus (Mouse).